The primary structure comprises 81 residues: Putative defensin-like protein 265 (81 aa).

A signal peptide spans 1–26 (MEKTVSRKVVVLAILLSLSCLCIAKA). 3 disulfides stabilise this stretch: C48–C66, C54–C71, and C58–C73.

This sequence belongs to the DEFL family.

The protein localises to the secreted. The sequence is that of Putative defensin-like protein 265 from Arabidopsis thaliana (Mouse-ear cress).